Reading from the N-terminus, the 488-residue chain is Altronate oxidoreductase (488 aa).

18–29 (VIQFGEGNFLRA) is a binding site for NAD(+).

The protein belongs to the mannitol dehydrogenase family. UxaB subfamily.

The catalysed reaction is D-altronate + NAD(+) = keto-D-tagaturonate + NADH + H(+). The protein operates within carbohydrate metabolism; pentose and glucuronate interconversion. This is Altronate oxidoreductase from Pectobacterium carotovorum subsp. carotovorum (strain PC1).